Here is a 615-residue protein sequence, read N- to C-terminus: RNA polymerase sigma factor RpoD (615 aa).

Positions 166–216 (GYIDPDDGITPPAAEVPPPVDTKTAKADDDSEDEEAEATEDEEEAESGPDP) are disordered. Positions 194 to 212 (DDSEDEEAEATEDEEEAES) are enriched in acidic residues. The sigma-70 factor domain-2 stretch occupies residues 381-451 (MVEANLRLVI…TRSIADQART (71 aa)). An Interaction with polymerase core subunit RpoC motif is present at residues 405–408 (DLIQ). Residues 460–536 (ETINKLNRIS…DSTMQSPIDV (77 aa)) form a sigma-70 factor domain-3 region. Positions 549-602 (VLSGLTAREAKVLRMRFGIDMNTDHTLEEVGKQFDVTRERIRQIEAKALRKLRH) are sigma-70 factor domain-4. Positions 575–594 (LEEVGKQFDVTRERIRQIEA) form a DNA-binding region, H-T-H motif.

This sequence belongs to the sigma-70 factor family. RpoD/SigA subfamily. In terms of assembly, interacts transiently with the RNA polymerase catalytic core.

The protein resides in the cytoplasm. Its function is as follows. Sigma factors are initiation factors that promote the attachment of RNA polymerase to specific initiation sites and are then released. This sigma factor is the primary sigma factor during exponential growth. This Pseudomonas protegens (strain DSM 19095 / LMG 27888 / CFBP 6595 / CHA0) protein is RNA polymerase sigma factor RpoD.